Consider the following 238-residue polypeptide: MEGGGGGADGQAQPVAQAPPAMQPMQQLSRYESQKRRDWNTFLQYLKNHRPPLTLARCSGAHVIEFLKYLDQFGKTKVHASGCAYYGQPSPPAPCPCPLRQAWGSLDALIGRLRAAYEESGHAPESNPFAARAVRIYLREVRDAQAKARGIPYEKKKRKRTQQQQPPPPPPPPPQHQPGAAAGEASSSSSAAAAAVAAEGSGSSAAAAAATSQTGGGGGGSTTTTTASAAAPTTATRV.

Disordered regions lie at residues 1-33 and 147-238; these read MEGG…RYES and KARG…ATRV. Residues 10–27 are compositionally biased toward low complexity; it reads GQAQPVAQAPPAMQPMQQ. Positions 30 to 157 constitute an ALOG domain; sequence RYESQKRRDW…ARGIPYEKKK (128 aa). A Nuclear localization signal motif is present at residues 155-159; it reads KKKRK. Residues 165 to 176 are compositionally biased toward pro residues; the sequence is QPPPPPPPPPQH. Composition is skewed to low complexity over residues 177-213 and 222-238; these read QPGA…ATSQ and TTTT…ATRV.

Belongs to the plant homeotic and developmental regulators ALOG protein family.

It localises to the nucleus. Its function is as follows. Probable transcription regulator that acts as a developmental regulator by promoting cell growth in response to light. The polypeptide is Protein G1-like8 (G1L8) (Oryza sativa subsp. japonica (Rice)).